Reading from the N-terminus, the 181-residue chain is Probable calcium-binding protein CML16 (181 aa).

The segment at 1 to 24 is disordered; that stretch reads MSNTTEKKMPQQQQVERPTALAPA. EF-hand domains are found at residues 23-58, 63-98, 100-135, and 136-171; these read PADA…IAPP, AGGR…GRGD, EHEA…IGEG, and CSAE…DAAA. Ca(2+) is bound by residues Asp36, Asp38, Asp40, Arg42, Glu47, Asp76, Asp78, Asp80, Glu87, Asp113, Asp115, Asp117, Arg119, Glu124, Asp149, Asp151, Asp153, Cys155, and Glu160.

In terms of biological role, potential calcium sensor. The protein is Probable calcium-binding protein CML16 (CML16) of Oryza sativa subsp. japonica (Rice).